The sequence spans 98 residues: Cell cycle protein GpsB (98 aa).

Positions 34–72 (LDMVIKDYEAFHQEIEELQQENLQLKKQLEEANKRQPAQ) form a coiled coil.

Belongs to the GpsB family. As to quaternary structure, forms polymers through the coiled coil domains. Interacts with PBP1, MreC and EzrA.

The protein localises to the cytoplasm. Functionally, divisome component that associates with the complex late in its assembly, after the Z-ring is formed, and is dependent on DivIC and PBP2B for its recruitment to the divisome. Together with EzrA, is a key component of the system that regulates PBP1 localization during cell cycle progression. Its main role could be the removal of PBP1 from the cell pole after pole maturation is completed. Also contributes to the recruitment of PBP1 to the division complex. Not essential for septum formation. In Bacillus licheniformis (strain ATCC 14580 / DSM 13 / JCM 2505 / CCUG 7422 / NBRC 12200 / NCIMB 9375 / NCTC 10341 / NRRL NRS-1264 / Gibson 46), this protein is Cell cycle protein GpsB.